The sequence spans 2311 residues: Proto-oncogene tyrosine-protein kinase ROS (2311 aa).

An N-terminal signal peptide occupies residues 1 to 24; that stretch reads MRNACLLLNRLGAFYFIWISAAYC. The Extracellular segment spans residues 25 to 1873; sequence SFSKNCQDLC…LAKDTVTSPD (1849 aa). N-linked (GlcNAc...) asparagine glycosylation is found at Asn-49, Asn-65, Asn-77, Asn-123, Asn-132, Asn-265, Asn-287, Asn-307, Asn-333, Asn-377, Asn-405, Asn-480, Asn-607, Asn-628, Asn-706, Asn-714, Asn-911, Asn-940, Asn-962, Asn-971, Asn-1110, Asn-1154, Asn-1180, Asn-1233, Asn-1255, Asn-1282, Asn-1316, Asn-1470, Asn-1509, Asn-1588, Asn-1628, Asn-1682, Asn-1696, and Asn-1730. 2 Fibronectin type-III domains span residues 110-202 and 203-294; these read KPGA…ASGV and PTTA…PESK. The 101-residue stretch at 571–671 folds into the Fibronectin type-III 3 domain; it reads LPTLPRLVTV…EPFRGMTFEE (101 aa). Fibronectin type-III domains are found at residues 952-1047 and 1051-1158; these read VPES…APEG and APAN…SSDI. Fibronectin type-III domains are found at residues 1459–1569, 1570–1669, 1671–1766, and 1767–1868; these read DTEK…TLYG, VPEG…AKTF, TPLS…TTAG, and VPSK…AKDT. Over residues 1754-1764 the composition is skewed to low complexity; sequence STSSPTSFKTT. Positions 1754-1786 are disordered; the sequence is STSSPTSFKTTAGVPSKPGTPKRAEDSKNSVQW. Residues 1775-1786 are compositionally biased toward basic and acidic residues; the sequence is KRAEDSKNSVQW. N-linked (GlcNAc...) asparagine glycosylation is found at Asn-1792, Asn-1795, and Asn-1822. A helical membrane pass occupies residues 1874-1898; it reads ITAIVAVIGAVVLGLTIIILFGFVW. Over 1899–2311 the chain is Cytoplasmic; it reads HQRWKSRKPA…SISSAELTSV (413 aa). The Protein kinase domain maps to 1961 to 2240; the sequence is LNLHKLLGSG…KLQEIRHSPL (280 aa). Residues 1967–1975 and Lys-1996 contribute to the ATP site; that span reads LGSGAFGEV. Catalysis depends on Asp-2095, which acts as the Proton acceptor. Position 2131 is a phosphotyrosine; by autocatalysis (Tyr-2131).

It belongs to the protein kinase superfamily. Tyr protein kinase family. Insulin receptor subfamily. Interacts with VAV3; constitutive interaction mediating VAV3 phosphorylation. Highest expression in kidney. Also expressed in gonad, thymus, bursa, brain and kidney.

The protein resides in the cell membrane. It carries out the reaction L-tyrosyl-[protein] + ATP = O-phospho-L-tyrosyl-[protein] + ADP + H(+). Its function is as follows. Orphan receptor tyrosine kinase (RTK) that may activate several downstream signaling pathways related to cell differentiation, proliferation, growth and survival including the PI3 kinase-mTOR signaling pathway. Mediates the phosphorylation of PTPN11, an activator of this pathway. May also phosphorylate and activate the transcription factor STAT3 to control anchorage-independent cell growth. Mediates the phosphorylation and the activation of VAV3, a guanine nucleotide exchange factor regulating cell morphology. May activate other downstream signaling proteins including AKT1, MAPK1, MAPK3, IRS1, and PLCG2. The sequence is that of Proto-oncogene tyrosine-protein kinase ROS (ROS1) from Gallus gallus (Chicken).